A 220-amino-acid chain; its full sequence is Aspartic protease inhibitor 8 (220 aa).

The N-terminal stretch at 1-23 is a signal peptide; that stretch reads MMKCLFLLCLCLLPIVVFSSTFT. Residues 24–32 constitute a propeptide that is removed on maturation; that stretch reads SQNLIDLPS. Disulfide bonds link cysteine 80–cysteine 125 and cysteine 174–cysteine 185.

This sequence belongs to the protease inhibitor I3 (leguminous Kunitz-type inhibitor) family.

It is found in the vacuole. Its function is as follows. Inhibitor of cathepsin D (aspartic protease) and trypsin (serine protease). May protect the plant by inhibiting proteases of invading organisms. This Solanum tuberosum (Potato) protein is Aspartic protease inhibitor 8.